Consider the following 550-residue polypeptide: Kinase suppressor of Ras B (550 aa).

Low complexity-rich tracts occupy residues 21–56 (SFSS…SNPI) and 63–75 (ATSS…STSS). Residues 21–87 (SFSSWRRSST…PPPASAPPRI (67 aa)) are disordered. The segment at 90-145 (YHKMVPSKSKFRQCDVCEHIFIFDFVRKQHLDDVYACNVCGIRVHKGCLDRVKNDC) adopts a Phorbol-ester/DAG-type zinc-finger fold. The interval 172-196 (TTASISKSLTTSPTCSTSTTMSPAG) is disordered. A compositionally biased stretch (low complexity) spans 177 to 193 (SKSLTTSPTCSTSTTMS). Positions 248 to 528 (VDVMTKIGDG…FQQIVKRITV (281 aa)) constitute a Protein kinase domain. Residues 530-550 (MPRKESNKQKRRSTAHENPLF) are disordered.

It belongs to the protein kinase superfamily. TKL Ser/Thr protein kinase family. As to quaternary structure, interacts with ndk-1.

In terms of biological role, probable inactive protein kinase which positively regulates Ras-mediated signaling probably acting at the level of let-60/ras or/and lin-45/raf. In the germline, regulates meiotic progression during oogenesis and mpk-1 (isoform b) phosphorylation. Plays a role in meiotic recombination events. Functions redundantly with ksr-1 in the Ras-mediated regulation of larval survival, the development of excretory canal, in determining vulval precursor cell fate during vulval induction and in mpk-1 phosphorylation in somatic cells. The polypeptide is Kinase suppressor of Ras B (Caenorhabditis elegans).